Here is a 611-residue protein sequence, read N- to C-terminus: Actin-related protein 5 (611 aa).

Coiled-coil stretches lie at residues 290–329 and 355–386; these read TLTSEEKQERRQQQLRRLQELNARRREEKLQLDQERLDRL and SAEELQSYINKLSLAIEQTKQKILQAEVNIEV.

It belongs to the actin family. ARP5 subfamily. Component of the chromatin remodeling INO80 complex.

It localises to the nucleus. Functionally, proposed core component of the chromatin remodeling INO80 complex which is involved in transcriptional regulation, DNA replication and probably DNA repair. In Gallus gallus (Chicken), this protein is Actin-related protein 5 (ACTR5).